Here is a 332-residue protein sequence, read N- to C-terminus: HPr kinase/phosphorylase (332 aa).

Residues histidine 153 and lysine 174 contribute to the active site. Position 168 to 175 (168 to 175) interacts with ATP; it reads GKSGLGKS. Residue serine 175 participates in Mg(2+) binding. The Proton acceptor; for phosphorylation activity. Proton donor; for dephosphorylation activity role is filled by aspartate 192. The tract at residues 217–226 is important for the catalytic mechanism of both phosphorylation and dephosphorylation; that stretch reads MEIRGLGVVD. Position 218 (glutamate 218) interacts with Mg(2+). The active site involves arginine 259. The segment at 280–285 is important for the catalytic mechanism of dephosphorylation; the sequence is PIFPGK.

It belongs to the HPrK/P family. Homohexamer. It depends on Mg(2+) as a cofactor.

The catalysed reaction is [HPr protein]-L-serine + ATP = [HPr protein]-O-phospho-L-serine + ADP + H(+). The enzyme catalyses [HPr protein]-O-phospho-L-serine + phosphate + H(+) = [HPr protein]-L-serine + diphosphate. In terms of biological role, catalyzes the ATP- as well as the pyrophosphate-dependent phosphorylation of a specific serine residue in HPr, a phosphocarrier protein of the phosphoenolpyruvate-dependent sugar phosphotransferase system (PTS). HprK/P also catalyzes the pyrophosphate-producing, inorganic phosphate-dependent dephosphorylation (phosphorolysis) of seryl-phosphorylated HPr (P-Ser-HPr). This chain is HPr kinase/phosphorylase, found in Chlorobium phaeovibrioides (strain DSM 265 / 1930) (Prosthecochloris vibrioformis (strain DSM 265)).